The chain runs to 369 residues: Mycofactocin maturase MftC (369 aa).

One can recognise a Radical SAM core domain in the interval 16–232; the sequence is LDAPICLTWE…KGERVLTGDS (217 aa). Residues C30, C34, C37, C251, C258, C269, C310, C313, C319, C323, and C341 each coordinate [4Fe-4S] cluster. Residues 347-369 form a disordered region; that stretch reads APALAQERHAPRPRVDHSRGSRE. Residues 352 to 369 show a composition bias toward basic and acidic residues; that stretch reads QERHAPRPRVDHSRGSRE.

This sequence belongs to the radical SAM superfamily. MftC family. In terms of assembly, interacts with MftB. [4Fe-4S] cluster serves as cofactor.

The catalysed reaction is [mycofactocin precursor peptide]-C-terminal glycyl-L-valyl-L-tyrosine + S-adenosyl-L-methionine = [mycofactocin precursor peptide]-C-terminal glycyl-N-{[2-(4-hydroxyphenyl)ethenyl]-3-methylbutanamide} + 5'-deoxyadenosine + L-methionine + CO2. It catalyses the reaction [mycofactocin precursor peptide]-C-terminal glycyl-N-{[2-(4-hydroxyphenyl)ethenyl]-3-methylbutanamide} + AH2 + S-adenosyl-L-methionine = [mycofactocin precursor peptide]-C-terminal glycyl-N-{5-[(4-hydroxyphenyl)methyl]-4,4-dimethyl-2-oxopyrrolidin-3-yl}acetamide + 5'-deoxyadenosine + L-methionine + A + H(+). In terms of biological role, radical S-adenosylmethionine (SAM) enzyme responsible for the first step of the biosynthesis of the enzyme cofactor mycofactocin (MFT). Catalyzes two reactions at the C-terminus of the mycofactocin precursor (the MftA peptide). The first one is the oxidative decarboxylation of the C-terminal L-tyrosine of MftA, forming an unsaturated tyramine moiety. The second reaction is the cross-linking of the tyramine with the penultimate L-valine residue, forming a five-membered lactam ring. Its activity requires the presence of the MftB chaperone. This is Mycofactocin maturase MftC from Mycobacterium ulcerans (strain Agy99).